Here is a 253-residue protein sequence, read N- to C-terminus: Phosphate import ATP-binding protein PstB (253 aa).

The region spanning 7–248 is the ABC transporter domain; the sequence is IKVRDLNLYY…PRDRRTEDYI (242 aa). 39–46 contributes to the ATP binding site; it reads GPSGCGKS.

It belongs to the ABC transporter superfamily. Phosphate importer (TC 3.A.1.7) family. As to quaternary structure, the complex is composed of two ATP-binding proteins (PstB), two transmembrane proteins (PstC and PstA) and a solute-binding protein (PstS).

Its subcellular location is the cell membrane. It carries out the reaction phosphate(out) + ATP + H2O = ADP + 2 phosphate(in) + H(+). Part of the ABC transporter complex PstSACB involved in phosphate import. Responsible for energy coupling to the transport system. The protein is Phosphate import ATP-binding protein PstB of Carboxydothermus hydrogenoformans (strain ATCC BAA-161 / DSM 6008 / Z-2901).